The chain runs to 665 residues: Protein LOW PHOTOSYNTHETIC EFFICIENCY 1, chloroplastic (665 aa).

A chloroplast-targeting transit peptide spans 1-68 (MQALSILPLK…VSSNRKVLFL (68 aa)). PPR repeat units lie at residues 145 to 179 (PLQVFCAMIKGFGKDKRLKPAVAVVDWLKRKKSES), 181 to 217 (GVIGPNLFIYNSLLGAMRGFGEAEKILKDMEEEGIVP), 218 to 252 (NIVTYNTLMVIYMEEGEFLKALGILDLTKEKGFEP), 253 to 283 (NPITYSTALLVYRRMEDGMGALEFFVELREK), 309 to 344 (GRICYQVMRRWLVKDDNWTTRVLKLLNAMDSAGVRP), 345 to 375 (SREEHERLIWACTREEHYIVGKELYKRIRER), 380 to 414 (SLSVCNHLIWLMGKAKKWWAALEIYEDLLDEGPEP), 422 to 456 (VVSHFNILLSAASKRGIWRWGVRLLNKMEDKGLKP), 457 to 491 (QRRHWNAVLVACSKASETTAAIQIFKAMVDNGEKP), 492 to 526 (TVISYGALLSALEKGKLYDEAFRVWNHMIKVGIEP), 527 to 561 (NLYAYTTMASVLTGQQKFNLLDTLLKEMASKGIEP), 562 to 596 (SVVTFNAVISGCARNGLSGVAYEWFHRMKSENVEP), and 597 to 631 (NEITYEMLIEALANDAKPRLAYELHVKAQNEGLKL).

It belongs to the PPR family. P subfamily. As to quaternary structure, interacts with HCF173.

The protein localises to the plastid. The protein resides in the chloroplast thylakoid membrane. It is found in the chloroplast stroma. Required for light-regulated photosystem II (PSII) biogenesis and grana thylakoids formation by binding to the 5' UTR of PSII subunit mRNAs (e.g. psbJ, psbN and psbA) in a light-dependent manner through a redox-based mechanism, and facilitating the association of HCF173 with target mRNAs, which encodes PSII reaction center proteins (e.g. J, N and D1), thus regulating its expression by modulating ribosome loading. The polypeptide is Protein LOW PHOTOSYNTHETIC EFFICIENCY 1, chloroplastic (Arabidopsis thaliana (Mouse-ear cress)).